We begin with the raw amino-acid sequence, 255 residues long: 3-deoxy-manno-octulosonate cytidylyltransferase (255 aa).

Belongs to the KdsB family.

It is found in the cytoplasm. It carries out the reaction 3-deoxy-alpha-D-manno-oct-2-ulosonate + CTP = CMP-3-deoxy-beta-D-manno-octulosonate + diphosphate. The protein operates within nucleotide-sugar biosynthesis; CMP-3-deoxy-D-manno-octulosonate biosynthesis; CMP-3-deoxy-D-manno-octulosonate from 3-deoxy-D-manno-octulosonate and CTP: step 1/1. It functions in the pathway bacterial outer membrane biogenesis; lipopolysaccharide biosynthesis. Activates KDO (a required 8-carbon sugar) for incorporation into bacterial lipopolysaccharide in Gram-negative bacteria. In Cellvibrio japonicus (strain Ueda107) (Pseudomonas fluorescens subsp. cellulosa), this protein is 3-deoxy-manno-octulosonate cytidylyltransferase.